Reading from the N-terminus, the 303-residue chain is Y-box-binding protein 1 (303 aa).

A compositionally biased stretch (polar residues) spans 1-12 (MSSEVETQQQQP). The interval 1-28 (MSSEVETQQQQPDALEGKAGQEPAATVG) is disordered. Residues 39-103 (GTVKWFNVRN…GEKGAEAANV (65 aa)) enclose the CSD domain. The interval 43 to 48 (WFNVRN) is C5-methylcytosine binding. A disordered region spans residues 98–303 (AEAANVTGPE…TPEAEQGGAE (206 aa)). The segment covering 122 to 132 (HYRRYPRRRGP) has biased composition (basic residues). Composition is skewed to low complexity over residues 133 to 143 (PRNYQQNYQNN) and 173 to 187 (PPYY…RPQY). 2 stretches are compositionally biased toward basic residues: residues 220–229 (FRPRFRRGPP) and 258–270 (RRYR…RRRR). Basic and acidic residues predominate over residues 271–284 (PENPKSQDGKETKA).

This sequence belongs to the YBX1 family.

It localises to the cytoplasm. Its subcellular location is the nucleus. It is found in the cytoplasmic granule. The protein resides in the secreted. The protein localises to the extracellular exosome. It localises to the P-body. DNA- and RNA-binding protein involved in various processes, such as translational repression, RNA stabilization, mRNA splicing and transcription regulation. Binds preferentially to the 5'-[CU]CUGCG-3' RNA motif and specifically recognizes mRNA transcripts modified by C5-methylcytosine (m5C). Promotes mRNA stabilization: acts by binding to m5C-containing mRNAs and preventing mRNA decay. Plays a role in the maternal-to-zygotic transition in early embryo by binding to m5C-containing maternal mRNAs and preventing their degradation. Also promotes maternal-to-zygotic transition in oocytes and embryos by promoting translation repression; molecular mechanisms governing translation repression are unknown. Plays a key role in RNA composition of extracellular exosomes by defining the sorting of small non-coding RNAs, such as tRNAs, Y RNAs, Vault RNAs and miRNAs. Probably sorts RNAs in exosomes by recognizing and binding C5-methylcytosine (m5C)-containing RNAs. Acts as a key effector of epidermal progenitors by preventing epidermal progenitor senescence: acts by regulating the translation of a senescence-associated subset of cytokine mRNAs, possibly by binding to m5C-containing mRNAs. Also involved in pre-mRNA alternative splicing regulation: binds to splice sites in pre-mRNA and regulates splice site selection. Also able to bind DNA and regulate transcription. Binds to promoters that contain a Y-box (5'-CTGATTGGCCAA-3'). Promotes separation of DNA strands that contain mismatches or are modified by cisplatin. Has endonucleolytic activity and can introduce nicks or breaks into double-stranded DNA, suggesting a role in DNA repair. The secreted form acts as an extracellular mitogen and stimulates cell migration and proliferation. The protein is Y-box-binding protein 1 of Xenopus laevis (African clawed frog).